The sequence spans 217 residues: Ribonuclease T (217 aa).

One can recognise an Exonuclease domain in the interval 20 to 195; the sequence is VVVDVETAGF…YDTEKTAELF (176 aa). 4 residues coordinate Mg(2+): aspartate 23, glutamate 25, histidine 182, and aspartate 187. The active-site Proton donor/acceptor is histidine 182.

This sequence belongs to the RNase T family. In terms of assembly, homodimer. The cofactor is Mg(2+).

Functionally, trims short 3' overhangs of a variety of RNA species, leaving a one or two nucleotide 3' overhang. Responsible for the end-turnover of tRNA: specifically removes the terminal AMP residue from uncharged tRNA (tRNA-C-C-A). Also appears to be involved in tRNA biosynthesis. The sequence is that of Ribonuclease T from Vibrio vulnificus (strain CMCP6).